Reading from the N-terminus, the 407-residue chain is S-adenosylmethionine synthase (407 aa).

140–145 (GQGSAD) contacts ATP.

This sequence belongs to the AdoMet synthase 2 family. Mg(2+) is required as a cofactor.

The enzyme catalyses L-methionine + ATP + H2O = S-adenosyl-L-methionine + phosphate + diphosphate. The protein operates within amino-acid biosynthesis; S-adenosyl-L-methionine biosynthesis; S-adenosyl-L-methionine from L-methionine: step 1/1. In terms of biological role, catalyzes the formation of S-adenosylmethionine from methionine and ATP. In Methanosphaera stadtmanae (strain ATCC 43021 / DSM 3091 / JCM 11832 / MCB-3), this protein is S-adenosylmethionine synthase.